The following is a 101-amino-acid chain: UPF0751 protein DSY3086 (101 aa).

This sequence belongs to the UPF0751 family.

The chain is UPF0751 protein DSY3086 from Desulfitobacterium hafniense (strain Y51).